The sequence spans 205 residues: MIGKLRGLIDSYAEDFVIIDVGGVGYQVHCSARTLQALPSPGEAATLSIETYVREDQIKLFGFRSDVEREWFRLLQTVQGVGAKVALAVLGTLPPADLGNAIALRDKAAVARTPGVGPKVAERIVTELKDKAPAFANVDPGVVRLSGAIEESRAPQPVADAISALINLGYGQPQAAAAIAAASRAAGDKAETAQLIRLGLKELAK.

The segment at 1-64 is domain I; that stretch reads MIGKLRGLID…EDQIKLFGFR (64 aa). Residues 65 to 143 form a domain II region; the sequence is SDVEREWFRL…AFANVDPGVV (79 aa). Positions 144–154 are flexible linker; it reads RLSGAIEESRA. The tract at residues 154–205 is domain III; that stretch reads APQPVADAISALINLGYGQPQAAAAIAAASRAAGDKAETAQLIRLGLKELAK.

Belongs to the RuvA family. Homotetramer. Forms an RuvA(8)-RuvB(12)-Holliday junction (HJ) complex. HJ DNA is sandwiched between 2 RuvA tetramers; dsDNA enters through RuvA and exits via RuvB. An RuvB hexamer assembles on each DNA strand where it exits the tetramer. Each RuvB hexamer is contacted by two RuvA subunits (via domain III) on 2 adjacent RuvB subunits; this complex drives branch migration. In the full resolvosome a probable DNA-RuvA(4)-RuvB(12)-RuvC(2) complex forms which resolves the HJ.

It localises to the cytoplasm. The RuvA-RuvB-RuvC complex processes Holliday junction (HJ) DNA during genetic recombination and DNA repair, while the RuvA-RuvB complex plays an important role in the rescue of blocked DNA replication forks via replication fork reversal (RFR). RuvA specifically binds to HJ cruciform DNA, conferring on it an open structure. The RuvB hexamer acts as an ATP-dependent pump, pulling dsDNA into and through the RuvAB complex. HJ branch migration allows RuvC to scan DNA until it finds its consensus sequence, where it cleaves and resolves the cruciform DNA. The chain is Holliday junction branch migration complex subunit RuvA from Bradyrhizobium sp. (strain ORS 278).